A 184-amino-acid polypeptide reads, in one-letter code: Outer-membrane lipoprotein carrier protein (184 aa).

The first 19 residues, 1–19, serve as a signal peptide directing secretion; the sequence is MKAFLKILMVLIFVSVAYA.

It belongs to the LolA family. Monomer.

It localises to the periplasm. In terms of biological role, participates in the translocation of lipoproteins from the inner membrane to the outer membrane. Only forms a complex with a lipoprotein if the residue after the N-terminal Cys is not an aspartate (The Asp acts as a targeting signal to indicate that the lipoprotein should stay in the inner membrane). The polypeptide is Outer-membrane lipoprotein carrier protein (Helicobacter pylori (strain P12)).